Here is a 539-residue protein sequence, read N- to C-terminus: Peptide chain release factor 3 (539 aa).

In terms of domain architecture, tr-type G spans 14–283 (EKRRNFAIIS…AFLEYALQPE (270 aa)). GTP contacts are provided by residues 23–30 (SHPDAGKT), 91–95 (DTPGH), and 145–148 (NKLD).

The protein belongs to the TRAFAC class translation factor GTPase superfamily. Classic translation factor GTPase family. PrfC subfamily.

The protein localises to the cytoplasm. In terms of biological role, increases the formation of ribosomal termination complexes and stimulates activities of RF-1 and RF-2. It binds guanine nucleotides and has strong preference for UGA stop codons. It may interact directly with the ribosome. The stimulation of RF-1 and RF-2 is significantly reduced by GTP and GDP, but not by GMP. The sequence is that of Peptide chain release factor 3 from Rippkaea orientalis (strain PCC 8801 / RF-1) (Cyanothece sp. (strain PCC 8801)).